The primary structure comprises 301 residues: D-psicose 3-epimerase (301 aa).

Residue tyrosine 16 participates in substrate binding. Glutamate 162 serves as the catalytic Proton donor/acceptor. Residue glutamate 162 participates in Mn(2+) binding. Substrate is bound by residues glutamate 168 and 195 to 198 (DTFH). Residues aspartate 195 and histidine 221 each coordinate Mn(2+). Arginine 227 provides a ligand contact to substrate. Glutamate 256 (proton donor/acceptor) is an active-site residue. Residue glutamate 256 coordinates Mn(2+).

It belongs to the hyi family. As to quaternary structure, homotetramer. Mn(2+) is required as a cofactor. It depends on Co(2+) as a cofactor.

It carries out the reaction D-allulose = keto-D-fructose. With respect to regulation, completely inhibited by EDTA and partially inhibited by Zn(2+), Mg(2+) and Cu(2+). Functionally, involved in the biosynthesis of D-psicose. Catalyzes the reversible epimerization of D-fructose at the C3 position to yield D-psicose. The enzyme is highly specific for D-psicose and shows very low activity with D-tagatose. This chain is D-psicose 3-epimerase, found in Enterocloster bolteae (strain ATCC BAA-613 / DSM 15670 / CCUG 46953 / JCM 12243 / WAL 16351) (Clostridium bolteae).